Here is a 483-residue protein sequence, read N- to C-terminus: V-type proton ATPase subunit H (483 aa).

Ser-483 is modified (phosphoserine).

It belongs to the V-ATPase H subunit family. As to quaternary structure, V-ATPase is a heteromultimeric enzyme made up of two complexes: the ATP-hydrolytic V1 complex and the proton translocation V0 complex. The V1 complex consists of three catalytic AB heterodimers that form a heterohexamer, three peripheral stalks each consisting of EG heterodimers, one central rotor including subunits D and F, and the regulatory subunits C and H. The proton translocation complex V0 consists of the proton transport subunit a, a ring of proteolipid subunits c9c'', rotary subunit d, subunits e and f, and the accessory subunits ATP6AP1/Ac45 and ATP6AP2/PRR. Interacts with AP2M1. Interacts with TM9SF4 in colon cancer cells. (Microbial infection) Interacts with HIV-1 Nef protein. In terms of assembly, (Microbial infection) Interacts with M.tuberculosis PtpA, which blocks V-ATPase trafficking and phagosome acidification. As to expression, widely expressed.

It localises to the cytoplasmic vesicle. It is found in the clathrin-coated vesicle membrane. Its function is as follows. Subunit of the V1 complex of vacuolar(H+)-ATPase (V-ATPase), a multisubunit enzyme composed of a peripheral complex (V1) that hydrolyzes ATP and a membrane integral complex (V0) that translocates protons. V-ATPase is responsible for acidifying and maintaining the pH of intracellular compartments and in some cell types, is targeted to the plasma membrane, where it is responsible for acidifying the extracellular environment. Subunit H is essential for V-ATPase activity, but not for the assembly of the complex. Involved in the endocytosis mediated by clathrin-coated pits, required for the formation of endosomes. The chain is V-type proton ATPase subunit H (ATP6V1H) from Homo sapiens (Human).